Here is a 187-residue protein sequence, read N- to C-terminus: GTP cyclohydrolase 1 (187 aa).

Zn(2+)-binding residues include Cys-78, His-81, and Cys-149.

It belongs to the GTP cyclohydrolase I family. As to quaternary structure, toroid-shaped homodecamer, composed of two pentamers of five dimers.

It catalyses the reaction GTP + H2O = 7,8-dihydroneopterin 3'-triphosphate + formate + H(+). It participates in cofactor biosynthesis; 7,8-dihydroneopterin triphosphate biosynthesis; 7,8-dihydroneopterin triphosphate from GTP: step 1/1. In Wolinella succinogenes (strain ATCC 29543 / DSM 1740 / CCUG 13145 / JCM 31913 / LMG 7466 / NCTC 11488 / FDC 602W) (Vibrio succinogenes), this protein is GTP cyclohydrolase 1.